The chain runs to 192 residues: Ion-translocating oxidoreductase complex subunit A (192 aa).

6 consecutive transmembrane segments (helical) span residues Leu-5 to Leu-25, Ile-39 to Val-59, Leu-72 to Val-92, Ala-102 to Leu-122, Ala-134 to Met-154, and Ala-171 to Val-191.

It belongs to the NqrDE/RnfAE family. The complex is composed of six subunits: RnfA, RnfB, RnfC, RnfD, RnfE and RnfG.

It localises to the cell inner membrane. In terms of biological role, part of a membrane-bound complex that couples electron transfer with translocation of ions across the membrane. The protein is Ion-translocating oxidoreductase complex subunit A of Shewanella loihica (strain ATCC BAA-1088 / PV-4).